The chain runs to 119 residues: Hydrogenase maturation factor HypA (119 aa).

Residue His2 participates in Ni(2+) binding. Cys73, Cys76, Cys89, and Cys92 together coordinate Zn(2+).

It belongs to the HypA/HybF family.

Involved in the maturation of [NiFe] hydrogenases. Required for nickel insertion into the metal center of the hydrogenase. In Dehalococcoides mccartyi (strain CBDB1), this protein is Hydrogenase maturation factor HypA.